The following is a 195-amino-acid chain: Shikimate kinase (195 aa).

26–31 (GSGKST) contributes to the ATP binding site. S30 is a binding site for Mg(2+). D48, R72, and G94 together coordinate substrate. R132 lines the ATP pocket. Residue R151 participates in substrate binding.

It belongs to the shikimate kinase family. Monomer. Requires Mg(2+) as cofactor.

The protein resides in the cytoplasm. The catalysed reaction is shikimate + ATP = 3-phosphoshikimate + ADP + H(+). Its pathway is metabolic intermediate biosynthesis; chorismate biosynthesis; chorismate from D-erythrose 4-phosphate and phosphoenolpyruvate: step 5/7. Its function is as follows. Catalyzes the specific phosphorylation of the 3-hydroxyl group of shikimic acid using ATP as a cosubstrate. The chain is Shikimate kinase from Synechococcus sp. (strain RCC307).